The chain runs to 213 residues: FMN-dependent NADH:quinone oxidoreductase 1 (213 aa).

18 to 20 (SVS) is a binding site for FMN.

This sequence belongs to the azoreductase type 1 family. Homodimer. FMN is required as a cofactor.

It carries out the reaction 2 a quinone + NADH + H(+) = 2 a 1,4-benzosemiquinone + NAD(+). The catalysed reaction is N,N-dimethyl-1,4-phenylenediamine + anthranilate + 2 NAD(+) = 2-(4-dimethylaminophenyl)diazenylbenzoate + 2 NADH + 2 H(+). Its function is as follows. Quinone reductase that provides resistance to thiol-specific stress caused by electrophilic quinones. Functionally, also exhibits azoreductase activity. Catalyzes the reductive cleavage of the azo bond in aromatic azo compounds to the corresponding amines. The chain is FMN-dependent NADH:quinone oxidoreductase 1 from Bacillus cereus (strain ZK / E33L).